Consider the following 344-residue polypeptide: Deoxyhypusine hydroxylase (344 aa).

HEAT-like PBS-type repeat units follow at residues 81–107 and 115–140; these read LKHELAYCLGQTANGAAIPYLTAVLED and RHEAAEALGALGDVASLGVLKRFRDR. 4 residues coordinate Fe cation: His-83, Glu-84, His-116, and Glu-117. A disordered region spans residues 169-188; that stretch reads EKLRASDFSSVDPAPPTAQG. 3 HEAT-like PBS-type repeats span residues 210–240, 248–274, and 281–308; these read KRYRAMFALRDLASPPDLPTAVPAVLALAKG, FRHEIAFVFGQLAHPASIPALTEALSN, and VRHEAAEALGSLGDEEGVEETLRKFLHD. Fe cation contacts are provided by His-250, Glu-251, His-283, and Glu-284.

Belongs to the deoxyhypusine hydroxylase family. The cofactor is Fe(2+).

It localises to the cytoplasm. Its subcellular location is the nucleus. The catalysed reaction is [eIF5A protein]-deoxyhypusine + AH2 + O2 = [eIF5A protein]-hypusine + A + H2O. It participates in protein modification; eIF5A hypusination. Its function is as follows. Catalyzes the hydroxylation of the N(6)-(4-aminobutyl)-L-lysine intermediate to form hypusine, an essential post-translational modification only found in mature eIF-5A factor. The sequence is that of Deoxyhypusine hydroxylase from Chaetomium globosum (strain ATCC 6205 / CBS 148.51 / DSM 1962 / NBRC 6347 / NRRL 1970) (Soil fungus).